Here is a 212-residue protein sequence, read N- to C-terminus: Regulatory protein RecX (212 aa).

This sequence belongs to the RecX family.

Its subcellular location is the cytoplasm. Modulates RecA activity. The polypeptide is Regulatory protein RecX (Clostridium perfringens (strain SM101 / Type A)).